Consider the following 1163-residue polypeptide: E3 ubiquitin-protein ligase TRIM33 (1163 aa).

The segment at 1–119 (MEVEASGTED…ASTSSSSSTP (119 aa)) is disordered. The segment covering 27–38 (TETKEAADEAKS) has biased composition (basic and acidic residues). The span at 45-54 (TPTTSSDSSS) shows a compositional bias: low complexity. The span at 72–87 (DPPPPPPPPPPPPPST) shows a compositional bias: pro residues. Residues 88-99 (PADSTAAAASPA) show a composition bias toward low complexity. The RING-type zinc-finger motif lies at 129–188 (CAVCKQSLQNRDCEPKLLPCLHSFCLKCIPQPDRKITMPVQGPHGQDTRIVNVMRCTVCH). The segment at 215–268 (NSTQVCTSCEDNASAIGFCVECGEWLCKTCIEAHQRVKFTKDHKIRKKEEVSPE) adopts a B box-type 1; atypical zinc-finger fold. 8 residues coordinate Zn(2+): cysteine 220, cysteine 223, cysteine 244, histidine 257, cysteine 280, histidine 283, cysteine 303, and histidine 308. The B box-type 2 zinc-finger motif lies at 275 to 316 (QRPVFCPVHKQEALKLFCETCDTLTCRDCQLLEHKEHRYQFL). Residues 345-369 (ASEVQKRLKEVAETHKKVEHEIKIA) adopt a coiled-coil conformation. The span at 524–533 (MQQAAIAQKH) shows a compositional bias: low complexity. Disordered regions lie at residues 524-555 (MQQAAIAQKHQQQHQHHQQQQHQHQHQQQQQQ), 575-599 (QIQQQMRIASQMSQHPRQGAPQMIQ), 656-706 (LQRQ…VITP), 753-848 (TVGP…PLPI), and 867-918 (NVKS…KEDD). The segment covering 534–548 (QQQHQHHQQQQHQHQ) has biased composition (basic residues). Residues 580–590 (MRIASQMSQHP) are compositionally biased toward polar residues. Composition is skewed to low complexity over residues 678-691 (SAANPTSPTSASMA) and 753-797 (TVGP…SGTT). Basic and acidic residues predominate over residues 821-830 (KTERTKDGRR). Positions 870-889 (SEPQSDNLSSCTNPNSRATL) are enriched in polar residues. The PHD-type zinc-finger motif lies at 921–968 (EDWCAVCQNGGELLCCDHCPKVFHITCHIPTLKSSPSGDWMCTFCRNL). Positions 991–1114 (AMSPEEQRRC…LYFEERLLEI (124 aa)) constitute a Bromo domain. A disordered region spans residues 1128 to 1147 (TQIEAEKEDSDDSDDDIIQP). Positions 1133–1144 (EKEDSDDSDDDI) are enriched in acidic residues.

The protein localises to the nucleus. It catalyses the reaction S-ubiquitinyl-[E2 ubiquitin-conjugating enzyme]-L-cysteine + [acceptor protein]-L-lysine = [E2 ubiquitin-conjugating enzyme]-L-cysteine + N(6)-ubiquitinyl-[acceptor protein]-L-lysine.. It participates in protein modification; protein ubiquitination. May act as an E3 ubiquitin-protein ligase and a transcriptional repressor. Involved in the regulation of embryonic and adult hematopoiesis. Required for normal development and survival of both committed erythroid progenitor cells and posterior mesenchymal cells. This is E3 ubiquitin-protein ligase TRIM33 (trim33) from Danio rerio (Zebrafish).